Here is a 223-residue protein sequence, read N- to C-terminus: Coiled-coil domain-containing protein 124 (223 aa).

Residues 1–126 form a disordered region; the sequence is MPKKFQGENT…AEKAKSHLEV (126 aa). A coiled-coil region spans residues 15–82; the sequence is ARARRAEAKA…LLEEEDSKLK (68 aa). Basic and acidic residues-rich tracts occupy residues 18–74 and 99–126; these read RRAE…QRLL and QIEETLRRDHQHKESPDPAEKAKSHLEV. A phosphoserine mark is found at serine 141 and serine 194.

This sequence belongs to the CCDC124 family. In terms of assembly, associates with translationally inactive ribosomes in the nonrotated state. Interacts with RASGEF1B.

The protein resides in the cytoplasm. It is found in the cytoskeleton. The protein localises to the microtubule organizing center. Its subcellular location is the centrosome. It localises to the midbody. Ribosome-binding protein involved in ribosome hibernation: associates with translationally inactive ribosomes and stabilizes the nonrotated conformation of the 80S ribosome, thereby promoting ribosome preservation and storage. Also required for proper progression of late cytokinetic stages. The protein is Coiled-coil domain-containing protein 124 (CCDC124) of Bos taurus (Bovine).